The following is a 337-amino-acid chain: Phosphate acyltransferase (337 aa).

Belongs to the PlsX family. In terms of assembly, homodimer. Probably interacts with PlsY.

The protein resides in the cytoplasm. It catalyses the reaction a fatty acyl-[ACP] + phosphate = an acyl phosphate + holo-[ACP]. The protein operates within lipid metabolism; phospholipid metabolism. Catalyzes the reversible formation of acyl-phosphate (acyl-PO(4)) from acyl-[acyl-carrier-protein] (acyl-ACP). This enzyme utilizes acyl-ACP as fatty acyl donor, but not acyl-CoA. The polypeptide is Phosphate acyltransferase (Latilactobacillus sakei subsp. sakei (strain 23K) (Lactobacillus sakei subsp. sakei)).